The chain runs to 84 residues: Exodeoxyribonuclease 7 small subunit (84 aa).

The protein belongs to the XseB family. As to quaternary structure, heterooligomer composed of large and small subunits.

It is found in the cytoplasm. The catalysed reaction is Exonucleolytic cleavage in either 5'- to 3'- or 3'- to 5'-direction to yield nucleoside 5'-phosphates.. Bidirectionally degrades single-stranded DNA into large acid-insoluble oligonucleotides, which are then degraded further into small acid-soluble oligonucleotides. The protein is Exodeoxyribonuclease 7 small subunit of Herminiimonas arsenicoxydans.